The following is a 396-amino-acid chain: OTU domain-containing protein 3 (396 aa).

The interval 1 to 49 is disordered; it reads MSRKQAAKSRPGSGGRRAEAERKRDERAARRALAKERRNRPDPGGSGCE. Over residues 16 to 41 the composition is skewed to basic and acidic residues; that stretch reads RRAEAERKRDERAARRALAKERRNRP. The 125-residue stretch at 64–188 folds into the OTU domain; it reads LKLREVPGDG…GEHYDSVRRI (125 aa). Lys-65 carries the N6-acetyllysine modification. The cys-loop stretch occupies residues 69 to 75; it reads VPGDGNC. The active site involves Asp-72. The active-site Nucleophile is the Cys-75. An N6-acetyllysine mark is found at Lys-121 and Lys-128. The variable-loop stretch occupies residues 126–136; sequence LSKPGTFAGND. Residues 176–181 are his-loop; that stretch reads YRYGEH. Residue His-181 is part of the active site. Lys-219 carries the N6-acetyllysine modification. The 41-residue stretch at 229–269 folds into the UBA-like domain; the sequence is DDVEDAVHKVGSATGCTDFNLIVQNLEAENYNIKSAITALL. Positions 275-381 are disordered; that stretch reads TGNDAEENHE…RDTGRSEADM (107 aa). Composition is skewed to basic and acidic residues over residues 280 to 301, 312 to 331, and 343 to 379; these read EENH…EAGS, NEGR…ESKA, and QRRE…RSEA. Lys-290 bears the N6-acetyllysine mark.

Glucose and fatty acids stimulate CREBBP-dependent acetylation, promoting its nuclear translocation.

Its subcellular location is the cytoplasm. The protein resides in the nucleus. It carries out the reaction Thiol-dependent hydrolysis of ester, thioester, amide, peptide and isopeptide bonds formed by the C-terminal Gly of ubiquitin (a 76-residue protein attached to proteins as an intracellular targeting signal).. Deubiquitinating enzyme that hydrolyzes 'Lys-6'- and 'Lys-11'-linked polyubiquitin. Also hydrolyzes heterotypic (mixed and branched) and homotypic chains. Important regulator of energy metabolism. Glucose and fatty acids trigger its nuclear translocation by CBP-dependent acetylation. In the nucleus, deubiquitinates and stabilizes the nuclear receptor PPARD regulating the expression of various genes involved in glucose and lipid metabolism and oxidative phosphorylation. Also acts as a negative regulator of the ribosome quality control (RQC) by mediating deubiquitination of 40S ribosomal proteins RPS10/eS10 and RPS20/uS10, thereby antagonizing ZNF598-mediated 40S ubiquitination. In Mus musculus (Mouse), this protein is OTU domain-containing protein 3 (Otud3).